Consider the following 446-residue polypeptide: 3-phosphoshikimate 1-carboxyvinyltransferase (446 aa).

3 residues coordinate 3-phosphoshikimate: lysine 21, serine 22, and arginine 26. Phosphoenolpyruvate is bound at residue lysine 21. Residues glycine 92 and arginine 120 each coordinate phosphoenolpyruvate. The 3-phosphoshikimate site is built by serine 165, glutamine 166, aspartate 308, and lysine 335. Glutamine 166 contacts phosphoenolpyruvate. Catalysis depends on aspartate 308, which acts as the Proton acceptor. Arginine 339, arginine 380, and lysine 406 together coordinate phosphoenolpyruvate.

Belongs to the EPSP synthase family. As to quaternary structure, monomer.

Its subcellular location is the cytoplasm. The enzyme catalyses 3-phosphoshikimate + phosphoenolpyruvate = 5-O-(1-carboxyvinyl)-3-phosphoshikimate + phosphate. It participates in metabolic intermediate biosynthesis; chorismate biosynthesis; chorismate from D-erythrose 4-phosphate and phosphoenolpyruvate: step 6/7. Catalyzes the transfer of the enolpyruvyl moiety of phosphoenolpyruvate (PEP) to the 5-hydroxyl of shikimate-3-phosphate (S3P) to produce enolpyruvyl shikimate-3-phosphate and inorganic phosphate. This chain is 3-phosphoshikimate 1-carboxyvinyltransferase, found in Chlamydia caviae (strain ATCC VR-813 / DSM 19441 / 03DC25 / GPIC) (Chlamydophila caviae).